Reading from the N-terminus, the 525-residue chain is CBL-interacting protein kinase 21 (525 aa).

In terms of domain architecture, Protein kinase spans 87–342; the sequence is YEMGRALGEG…ITGIRAHEWF (256 aa). ATP-binding positions include 93–101 and Lys-116; that span reads LGEGHFGKV. The active-site Proton acceptor is Asp-210. The interval 228–257 is activation loop; that stretch reads DFGLSALPQNQRKDGLLHTTCGSPNYIAPE. The NAF domain maps to 372–401; it reads DIETSPAISQINAFQLIGMSSCLDLSGFFE. The tract at residues 407 to 436 is PPI; sequence ERKIRFVSNYSPTSLFEKIESTVTEKGFQV.

The protein belongs to the protein kinase superfamily. CAMK Ser/Thr protein kinase family. SNF1 subfamily. The cofactor is Mn(2+).

It carries out the reaction L-seryl-[protein] + ATP = O-phospho-L-seryl-[protein] + ADP + H(+). The catalysed reaction is L-threonyl-[protein] + ATP = O-phospho-L-threonyl-[protein] + ADP + H(+). Its function is as follows. CIPK serine-threonine protein kinases interact with CBL proteins. Binding of a CBL protein to the regulatory NAF domain of CIPK protein lead to the activation of the kinase in a calcium-dependent manner. The protein is CBL-interacting protein kinase 21 (CIPK21) of Oryza sativa subsp. japonica (Rice).